A 77-amino-acid polypeptide reads, in one-letter code: Large ribosomal subunit protein bL28 (77 aa).

This sequence belongs to the bacterial ribosomal protein bL28 family.

The protein is Large ribosomal subunit protein bL28 of Acidovorax ebreus (strain TPSY) (Diaphorobacter sp. (strain TPSY)).